A 317-amino-acid chain; its full sequence is Melanocyte-stimulating hormone receptor (317 aa).

At 1 to 37 (MAVQGSQRRLLGSLNSTPTAIPQLGLAANQTGARCLE) the chain is on the extracellular side. An N-linked (GlcNAc...) asparagine glycan is attached at Asn29. A helical transmembrane segment spans residues 38 to 63 (VSISDGLFLSLGLVSLVENALVVATI). Residues 64-72 (AKNRNLHSP) are Cytoplasmic-facing. A helical transmembrane segment spans residues 73–93 (MYCFICCLALSDLLVSGSNVL). Over 94–118 (ETAVILLLEAGALVARAAVLQQLDN) the chain is Extracellular. The chain crosses the membrane as a helical span at residues 119 to 140 (VIDVITCSSMLSSLCFLGAIAV). Topologically, residues 141-163 (DRYISIFYALRYHSIVTLPRARR) are cytoplasmic. A helical transmembrane segment spans residues 164 to 183 (AVAAIWVASVVFSTLFIAYY). Topologically, residues 184–191 (DHVAVLLC) are extracellular. A helical transmembrane segment spans residues 192–211 (LVVFFLAMLVLMAVLYVHML). Topologically, residues 212–240 (ARACQHAQGIARLHKRQRPVHQGFGLKGA) are cytoplasmic. A helical membrane pass occupies residues 241-266 (VTLTILLGIFFLCWGPFFLHLTLIVL). Topologically, residues 267–279 (CPEHPTCGCIFKN) are extracellular. A helical membrane pass occupies residues 280–300 (FNLFLALIICNAIIDPLIYAF). Over 301 to 317 (HSQELRRTLKEVLTCSW) the chain is Cytoplasmic. Residue Cys315 is the site of S-palmitoyl cysteine attachment.

It belongs to the G-protein coupled receptor 1 family. Interacts with MGRN1, but does not undergo MGRN1-mediated ubiquitination; this interaction competes with GNAS-binding and thus inhibits agonist-induced cAMP production. Interacts with OPN3; the interaction results in a decrease in MC1R-mediated cAMP signaling and ultimately a decrease in melanin production in melanocytes. In terms of tissue distribution, expressed in melanocytes. Expressed in corticoadrenal tissue.

The protein localises to the cell membrane. Its function is as follows. Receptor for MSH (alpha, beta and gamma) and ACTH. The activity of this receptor is mediated by G proteins which activate adenylate cyclase. Mediates melanogenesis, the production of eumelanin (black/brown) and phaeomelanin (red/yellow), via regulation of cAMP signaling in melanocytes. In Homo sapiens (Human), this protein is Melanocyte-stimulating hormone receptor (MC1R).